We begin with the raw amino-acid sequence, 197 residues long: Dephospho-CoA kinase (197 aa).

Residues valine 3–threonine 197 form the DPCK domain. Glycine 11–threonine 16 contacts ATP.

This sequence belongs to the CoaE family.

It localises to the cytoplasm. It carries out the reaction 3'-dephospho-CoA + ATP = ADP + CoA + H(+). The protein operates within cofactor biosynthesis; coenzyme A biosynthesis; CoA from (R)-pantothenate: step 5/5. Catalyzes the phosphorylation of the 3'-hydroxyl group of dephosphocoenzyme A to form coenzyme A. This Hydrogenovibrio crunogenus (strain DSM 25203 / XCL-2) (Thiomicrospira crunogena) protein is Dephospho-CoA kinase.